The following is a 358-amino-acid chain: MSQCQIWVRHHLCCSFQIPTLAASLFQLGRCRSVKEFEKLNRIGEGTYGIVYRARDTQTDEIVALKKVRMDKEKDGIPISSLREITLLLRLRHPNIVELKEVVVGNHLESIFLVMGYCEQDLASLLENMPTPFSEAQVKCILLQVLRGLQYLHRSFIIHRDLKVSNLLMTDKGCVKTADFGLARAYGVPVKPMTPKVVTLWYRAPELLLGTTTQTTSIDMWAVGCILAELLAHKPLLPGTSEIHQIDLIVQLLGTPSENIWPGFSKLPLAGQYSLRKQPYNNLKHKFPWLSEAGLRLLNFLFMYDPKKRATAGDCLESSYFKEKPLPCEPELMPTFPHHRNKRAAPAATEGQSKRCRP.

The region spanning 37 to 321 is the Protein kinase domain; that stretch reads FEKLNRIGEG…AGDCLESSYF (285 aa). Residues 43-51 and K66 each bind ATP; that span reads IGEGTYGIV. D161 serves as the catalytic Proton acceptor. The residue at position 194 (T194) is a Phosphothreonine. The disordered stretch occupies residues 332-358; the sequence is LMPTFPHHRNKRAAPAATEGQSKRCRP.

It belongs to the protein kinase superfamily. CMGC Ser/Thr protein kinase family. CDC2/CDKX subfamily. In terms of assembly, heterodimer with CCNQ, the interaction is required for kinase activity. Interacts with ETS2. Interacts with PRK2.

It localises to the cytoplasm. Its subcellular location is the cytoskeleton. It is found in the cilium basal body. It catalyses the reaction L-seryl-[protein] + ATP = O-phospho-L-seryl-[protein] + ADP + H(+). The catalysed reaction is L-threonyl-[protein] + ATP = O-phospho-L-threonyl-[protein] + ADP + H(+). Its function is as follows. Cyclin-dependent kinase that phosphorylates the transcription factor ETS2 (in vitro) and positively controls its proteasomal degradation (in cells). Involved in the regulation of actin cytoskeleton organization through the phosphorylation of actin dynamics regulators such as PKN2. Is a negative regulator of ciliogenesis through phosphorylation of PKN2 and promotion of RhoA signaling. This is Cyclin-dependent kinase 10 (Cdk10) from Rattus norvegicus (Rat).